Reading from the N-terminus, the 207-residue chain is MSEAAHSGAAPADLVELGRIASAYGVKGWVKVQPHSAQAEVLRTVSHWWLTRPAPQAARGVVASVPRAYQVLQARVHGGAVVAQLAGIDDRDQAEALRGCLVQAARSAFPAPADDEYYWVDLIGCALYSDADGESRLLGVVDEVFDNGAHAVLKVLRQQLQPGQPGPVPLVDPKGRPLEELVPFVRAHIRHVDLAARRIDSDWPLDY.

The PRC barrel domain occupies 114 to 207; sequence DDEYYWVDLI…RIDSDWPLDY (94 aa).

This sequence belongs to the RimM family. In terms of assembly, binds ribosomal protein uS19.

Its subcellular location is the cytoplasm. Functionally, an accessory protein needed during the final step in the assembly of 30S ribosomal subunit, possibly for assembly of the head region. Essential for efficient processing of 16S rRNA. May be needed both before and after RbfA during the maturation of 16S rRNA. It has affinity for free ribosomal 30S subunits but not for 70S ribosomes. The chain is Ribosome maturation factor RimM from Bordetella bronchiseptica (strain ATCC BAA-588 / NCTC 13252 / RB50) (Alcaligenes bronchisepticus).